Reading from the N-terminus, the 290-residue chain is uncharacterized protein (290 aa).

The signal sequence occupies residues 1–25 (MNKKSILSKTSLGSLFFLFGTALSA). Cys-26 is lipidated: N-palmitoyl cysteine. Cys-26 carries the S-diacylglycerol cysteine lipid modification. The disordered stretch occupies residues 183–203 (GTDSKGSGSNNQNGGVTEKDF). The segment covering 186–197 (SKGSGSNNQNGG) has biased composition (low complexity).

It belongs to the MG439/MG440 family.

The protein localises to the cell membrane. This is an uncharacterized protein from Mycoplasma pneumoniae (strain ATCC 29342 / M129 / Subtype 1) (Mycoplasmoides pneumoniae).